Here is a 635-residue protein sequence, read N- to C-terminus: DNA mismatch repair protein MutL (635 aa).

A disordered region spans residues 359–399 (GTNKYAQPEAAKSSAAEQAVARERSSARERAAPAYKEDHPY). Over residues 364-377 (AQPEAAKSSAAEQA) the composition is skewed to low complexity. The segment covering 378-399 (VARERSSARERAAPAYKEDHPY) has biased composition (basic and acidic residues).

The protein belongs to the DNA mismatch repair MutL/HexB family.

In terms of biological role, this protein is involved in the repair of mismatches in DNA. It is required for dam-dependent methyl-directed DNA mismatch repair. May act as a 'molecular matchmaker', a protein that promotes the formation of a stable complex between two or more DNA-binding proteins in an ATP-dependent manner without itself being part of a final effector complex. The sequence is that of DNA mismatch repair protein MutL from Yersinia pestis bv. Antiqua (strain Antiqua).